A 174-amino-acid polypeptide reads, in one-letter code: N-terminal acetyltransferase B complex catalytic subunit NAA20 (174 aa).

The N-acetyltransferase domain maps to Thr2 to Ser151.

The protein belongs to the acetyltransferase family. ARD1 subfamily.

It carries out the reaction N-terminal L-methionyl-L-asparaginyl-[protein] + acetyl-CoA = N-terminal N(alpha)-acetyl-L-methionyl-L-asparaginyl-[protein] + CoA + H(+). It catalyses the reaction N-terminal L-methionyl-L-glutaminyl-[protein] + acetyl-CoA = N-terminal N(alpha)-acetyl-L-methionyl-L-glutaminyl-[protein] + CoA + H(+). The catalysed reaction is N-terminal L-methionyl-L-aspartyl-[protein] + acetyl-CoA = N-terminal N(alpha)-acetyl-L-methionyl-L-aspartyl-[protein] + CoA + H(+). The enzyme catalyses N-terminal L-methionyl-L-glutamyl-[protein] + acetyl-CoA = N-terminal N(alpha)-acetyl-L-methionyl-L-glutamyl-[protein] + CoA + H(+). In terms of biological role, catalytic subunit of the NatB N-alpha-acetyltransferase complex. Involved in plant immunity through the regulation of SNC1 stability. This Arabidopsis thaliana (Mouse-ear cress) protein is N-terminal acetyltransferase B complex catalytic subunit NAA20.